Here is a 516-residue protein sequence, read N- to C-terminus: Leucine-rich repeat transmembrane neuronal protein 2 (516 aa).

An N-terminal signal peptide occupies residues 1 to 33 (MGLHFKWPLGAPMLAAIYAMSMVLKMLPALGMA). Residues 34 to 61 (CPPKCRCEKLLFYCDSQGFHSVPNATDK) enclose the LRRNT domain. Topologically, residues 34-422 (CPPKCRCEKL…EPDNAIFTQR (389 aa)) are extracellular. N-linked (GlcNAc...) asparagine glycosylation is present at asparagine 57. LRR repeat units lie at residues 63–83 (SLGL…QFAS), 86–107 (QLTW…AFQG), 110–131 (KLKE…TFTQ), 134–155 (NLQN…LFYG), 158–179 (KLQT…LFWD), 182–203 (SLEF…GFAG), 206–227 (KLRE…HFLR), 230–251 (SLHT…MEWT), 254–275 (TLEK…VFET), and 278–299 (NLKI…ILNS). Asparagine 126 carries an N-linked (GlcNAc...) asparagine glycan. Asparagine 243 carries N-linked (GlcNAc...) asparagine glycosylation. Residues 311–362 (NLWECSARICALASWLGSFQGRWEHSILCHSPDHTQGEDILDAVHGFQLCWN) form the LRRCT domain. A glycan (N-linked (GlcNAc...) asparagine) is linked at asparagine 362. The helical transmembrane segment at 423–443 (VITGTMALLFSFFFIIFIVFI) threads the bilayer. At 444-516 (SRKCCPPTLR…QQLPYKECEV (73 aa)) the chain is on the cytoplasmic side. The Involved in DLG4-binding signature appears at 513–516 (ECEV).

This sequence belongs to the LRRTM family. In terms of assembly, interacts with DLG4. Interacts with neurexin NRXN1; interaction is mediated by heparan sulfate glycan modification on neurexin. As to expression, expressed in neuronal tissues.

Its subcellular location is the cell membrane. It localises to the postsynaptic cell membrane. Its function is as follows. Involved in the development and maintenance of excitatory synapses in the vertebrate nervous system. Regulates surface expression of AMPA receptors and instructs the development of functional glutamate release sites. Acts as a ligand for the presynaptic receptors NRXN1-A and NRXN1-B. The protein is Leucine-rich repeat transmembrane neuronal protein 2 (LRRTM2) of Homo sapiens (Human).